The following is a 442-amino-acid chain: 3-phosphoshikimate 1-carboxyvinyltransferase (442 aa).

Positions 25, 26, and 30 each coordinate 3-phosphoshikimate. K25 contributes to the phosphoenolpyruvate binding site. Phosphoenolpyruvate-binding residues include G96 and R124. The 3-phosphoshikimate site is built by S171, S172, Q173, S203, D325, and K352. Residue Q173 coordinates phosphoenolpyruvate. Catalysis depends on D325, which acts as the Proton acceptor. Positions 356, 400, and 425 each coordinate phosphoenolpyruvate.

The protein belongs to the EPSP synthase family. In terms of assembly, monomer.

It is found in the cytoplasm. The enzyme catalyses 3-phosphoshikimate + phosphoenolpyruvate = 5-O-(1-carboxyvinyl)-3-phosphoshikimate + phosphate. It functions in the pathway metabolic intermediate biosynthesis; chorismate biosynthesis; chorismate from D-erythrose 4-phosphate and phosphoenolpyruvate: step 6/7. Catalyzes the transfer of the enolpyruvyl moiety of phosphoenolpyruvate (PEP) to the 5-hydroxyl of shikimate-3-phosphate (S3P) to produce enolpyruvyl shikimate-3-phosphate and inorganic phosphate. The protein is 3-phosphoshikimate 1-carboxyvinyltransferase of Bordetella bronchiseptica (strain ATCC BAA-588 / NCTC 13252 / RB50) (Alcaligenes bronchisepticus).